We begin with the raw amino-acid sequence, 149 residues long: UPF0260 protein PSPTO_3918 (149 aa).

The protein belongs to the UPF0260 family.

This Pseudomonas syringae pv. tomato (strain ATCC BAA-871 / DC3000) protein is UPF0260 protein PSPTO_3918.